Here is a 288-residue protein sequence, read N- to C-terminus: Diaminopimelate epimerase (288 aa).

Substrate is bound by residues Asn-14 and Asn-67. Cys-76 serves as the catalytic Proton donor. Residues 77–78 (GN), Asn-166, Asn-199, and 217–218 (ER) each bind substrate. Cys-226 serves as the catalytic Proton acceptor. 227-228 (GT) is a substrate binding site.

Belongs to the diaminopimelate epimerase family. In terms of assembly, homodimer.

The protein resides in the cytoplasm. The catalysed reaction is (2S,6S)-2,6-diaminopimelate = meso-2,6-diaminopimelate. It participates in amino-acid biosynthesis; L-lysine biosynthesis via DAP pathway; DL-2,6-diaminopimelate from LL-2,6-diaminopimelate: step 1/1. Catalyzes the stereoinversion of LL-2,6-diaminopimelate (L,L-DAP) to meso-diaminopimelate (meso-DAP), a precursor of L-lysine and an essential component of the bacterial peptidoglycan. This is Diaminopimelate epimerase from Bacillus cereus (strain ATCC 14579 / DSM 31 / CCUG 7414 / JCM 2152 / NBRC 15305 / NCIMB 9373 / NCTC 2599 / NRRL B-3711).